The chain runs to 306 residues: Homoserine O-acetyltransferase (306 aa).

The Acyl-thioester intermediate role is filled by C142. Substrate contacts are provided by K163 and S194. H237 serves as the catalytic Proton acceptor. The active site involves E239. A substrate-binding site is contributed by R251.

Belongs to the MetA family.

Its subcellular location is the cytoplasm. The enzyme catalyses L-homoserine + acetyl-CoA = O-acetyl-L-homoserine + CoA. It participates in amino-acid biosynthesis; L-methionine biosynthesis via de novo pathway; O-acetyl-L-homoserine from L-homoserine: step 1/1. Transfers an acetyl group from acetyl-CoA to L-homoserine, forming acetyl-L-homoserine. This chain is Homoserine O-acetyltransferase, found in Clostridium tetani (strain Massachusetts / E88).